We begin with the raw amino-acid sequence, 286 residues long: Spermidine/putrescine transport system permease protein PotB (286 aa).

Over Met-1–Val-13 the chain is Cytoplasmic. Residues Ala-14–Ala-33 form a helical membrane-spanning segment. Over Val-34 to Ser-71 the chain is Periplasmic. Residues Val-66–Arg-274 form the ABC transmembrane type-1 domain. A helical transmembrane segment spans residues Met-72–Met-91. The Cytoplasmic portion of the chain corresponds to Ser-92–Pro-100. A helical membrane pass occupies residues Leu-101–Gly-120. At Met-121 to Glu-151 the chain is on the periplasmic side. The chain crosses the membrane as a helical span at residues Ile-152–Tyr-171. Residues Ser-172–Val-199 lie on the Cytoplasmic side of the membrane. A helical transmembrane segment spans residues Ile-200 to Ala-219. The Periplasmic segment spans residues Met-220–Pro-252. The helical transmembrane segment at Phe-253–Tyr-272 threads the bilayer. Topologically, residues Tyr-273–Glu-286 are cytoplasmic.

It belongs to the binding-protein-dependent transport system permease family. CysTW subfamily.

It is found in the cell inner membrane. Required for the activity of the bacterial periplasmic transport system of putrescine and spermidine. The sequence is that of Spermidine/putrescine transport system permease protein PotB (potB) from Haemophilus influenzae (strain ATCC 51907 / DSM 11121 / KW20 / Rd).